We begin with the raw amino-acid sequence, 146 residues long: MSLTLRVTTPLAAVLEEEGLASIRAEDASGGFGLLPGHVDLLTVIEAGVLRFRRPEGPWHFCAIRGGVLRATGGRLVTVACREAVPGEDLARLEAGLKRQAEAADQAARRARGEQVRLHANAIRSLMRHLDRAPGADLSGIVEAFE.

Belongs to the ATPase epsilon chain family. As to quaternary structure, F-type ATPases have 2 components, CF(1) - the catalytic core - and CF(0) - the membrane proton channel. CF(1) has five subunits: alpha(3), beta(3), gamma(1), delta(1), epsilon(1). CF(0) has three main subunits: a, b and c.

Its subcellular location is the cell inner membrane. Its function is as follows. Produces ATP from ADP in the presence of a proton gradient across the membrane. This is ATP synthase epsilon chain 2 from Cereibacter sphaeroides (strain ATCC 17023 / DSM 158 / JCM 6121 / CCUG 31486 / LMG 2827 / NBRC 12203 / NCIMB 8253 / ATH 2.4.1.) (Rhodobacter sphaeroides).